We begin with the raw amino-acid sequence, 386 residues long: Centrosomal protein of 44 kDa (386 aa).

The tract at residues 11 to 194 (RKLEQVLRSL…GVPEGTVTST (184 aa)) is binds with microtubules and centrioles. A coiled-coil region spans residues 232–262 (ELTALQIALAECQEKLKKLTWIEKRLECLEA). S329 is subject to Phosphoserine. Residues 359 to 382 (SEETTMQKMERMKKMFEETAELLK) adopt a coiled-coil conformation.

In terms of assembly, interacts with CROCC. Interacts with POC1B; the interaction is direct and recruits POC1B to centriolar microtubules. Binds to centriolar microtubules.

Its subcellular location is the cytoplasm. The protein localises to the cytoskeleton. It is found in the microtubule organizing center. It localises to the centrosome. The protein resides in the centriole. Its subcellular location is the spindle pole. The protein localises to the midbody. Centriole-enriched microtubule-binding protein involved in centriole biogenesis. In collaboration with CEP295 and POC1B, is required for the centriole-to-centrosome conversion by ensuring the formation of bona fide centriole wall. Functions as a linker component that maintains centrosome cohesion. Associates with CROCC and regulates its stability and localization to the centrosome. The sequence is that of Centrosomal protein of 44 kDa (Cep44) from Rattus norvegicus (Rat).